We begin with the raw amino-acid sequence, 329 residues long: Beta-ketoacyl-[acyl-carrier-protein] synthase III (329 aa).

Active-site residues include Cys-114 and His-255. The interval 256–260 (QANQR) is ACP-binding. Residue Asn-285 is part of the active site.

The protein belongs to the thiolase-like superfamily. FabH family. Homodimer.

It localises to the cytoplasm. It carries out the reaction malonyl-[ACP] + acetyl-CoA + H(+) = 3-oxobutanoyl-[ACP] + CO2 + CoA. It participates in lipid metabolism; fatty acid biosynthesis. In terms of biological role, catalyzes the condensation reaction of fatty acid synthesis by the addition to an acyl acceptor of two carbons from malonyl-ACP. Catalyzes the first condensation reaction which initiates fatty acid synthesis and may therefore play a role in governing the total rate of fatty acid production. Possesses both acetoacetyl-ACP synthase and acetyl transacylase activities. Its substrate specificity determines the biosynthesis of branched-chain and/or straight-chain of fatty acids. This chain is Beta-ketoacyl-[acyl-carrier-protein] synthase III, found in Trichodesmium erythraeum (strain IMS101).